The primary structure comprises 318 residues: Glutathione synthetase (318 aa).

The ATP-grasp domain occupies 124–310; it reads EKLFTAWFPE…ITGKLMDAIE (187 aa). 150 to 207 provides a ligand contact to ATP; the sequence is FREQHGDVILKPLDGMGGASIFRVKEGDPNLSVIIETLTNHGQNYCMAQTFVPDISNG. Residues glutamate 281 and asparagine 283 each contribute to the Mg(2+) site.

The protein belongs to the prokaryotic GSH synthase family. Mg(2+) is required as a cofactor. It depends on Mn(2+) as a cofactor.

The catalysed reaction is gamma-L-glutamyl-L-cysteine + glycine + ATP = glutathione + ADP + phosphate + H(+). It participates in sulfur metabolism; glutathione biosynthesis; glutathione from L-cysteine and L-glutamate: step 2/2. The chain is Glutathione synthetase from Vibrio cholerae serotype O1 (strain ATCC 39315 / El Tor Inaba N16961).